The primary structure comprises 124 residues: Small ribosomal subunit protein eS6 (124 aa).

The protein belongs to the eukaryotic ribosomal protein eS6 family.

This is Small ribosomal subunit protein eS6 from Methanococcus maripaludis (strain C5 / ATCC BAA-1333).